The primary structure comprises 70 residues: UPF0434 protein MCA0634 (70 aa).

The protein belongs to the UPF0434 family.

The chain is UPF0434 protein MCA0634 from Methylococcus capsulatus (strain ATCC 33009 / NCIMB 11132 / Bath).